The following is a 797-amino-acid chain: GDH/6PGL endoplasmic bifunctional protein (797 aa).

The N-terminal stretch at methionine 1 to alanine 24 is a signal peptide. Pyrrolidone carboxylic acid is present on glutamine 25. The interval glutamine 25–glycine 531 is hexose-6-phosphate dehydrogenase. NADP(+) is bound by residues glycine 37 to lysine 44 and tyrosine 154. Asparagine 162 carries N-linked (GlcNAc...) asparagine glycosylation. Residue lysine 179 participates in NADP(+) binding. D-glucose 6-phosphate is bound by residues lysine 179, histidine 209–lysine 213, glutamate 248, and aspartate 267. N6-succinyllysine is present on lysine 213. The active-site Proton acceptor is histidine 272. Asparagine 287 is a glycosylation site (N-linked (GlcNAc...) asparagine). D-glucose 6-phosphate is bound by residues lysine 365 and arginine 370. Residue arginine 375 coordinates NADP(+). A linker region spans residues glutamine 532–arginine 545. The 6-phosphogluconolactonase stretch occupies residues proline 546–glycine 797. Tryptophan 623 contacts NADP(+). Asparagine 689 carries an N-linked (GlcNAc...) asparagine glycan.

It in the N-terminal section; belongs to the glucose-6-phosphate dehydrogenase family. The protein in the C-terminal section; belongs to the glucosamine/galactosamine-6-phosphate isomerase family. 6-phosphogluconolactonase subfamily. As to quaternary structure, homodimer.

It localises to the endoplasmic reticulum lumen. The enzyme catalyses D-glucose 6-phosphate + NAD(+) = 6-phospho-D-glucono-1,5-lactone + NADH + H(+). It catalyses the reaction D-glucose 6-phosphate + NADP(+) = 6-phospho-D-glucono-1,5-lactone + NADPH + H(+). It carries out the reaction 6-phospho-D-glucono-1,5-lactone + H2O = 6-phospho-D-gluconate + H(+). The catalysed reaction is 2-deoxy-D-glucose 6-phosphate + NAD(+) = 2-deoxy-6-phospho-D-glucono-1,5-lactone + NADH + H(+). The enzyme catalyses 2-deoxy-D-glucose 6-phosphate + NADP(+) = 2-deoxy-6-phospho-D-glucono-1,5-lactone + NADPH + H(+). It catalyses the reaction D-galactose 6-phosphate + NADP(+) = 6-phospho-D-galactono-1,5-lactone + NADPH + H(+). It carries out the reaction D-galactose 6-phosphate + NAD(+) = 6-phospho-D-galactono-1,5-lactone + NADH + H(+). The catalysed reaction is D-glucosamine 6-phosphate + NADP(+) = 2-amino-2-deoxy-6-phospho-D-glucono-1,5-lactone + NADPH + 2 H(+). The enzyme catalyses D-glucose + NAD(+) = D-glucono-1,5-lactone + NADH + H(+). It catalyses the reaction D-glucose + NADP(+) = D-glucono-1,5-lactone + NADPH + H(+). It carries out the reaction D-glucose 6-sulfate + NADP(+) = 6-sulfo-D-glucono-1,5-lactone + NADPH + H(+). Its pathway is carbohydrate degradation; pentose phosphate pathway; D-ribulose 5-phosphate from D-glucose 6-phosphate (oxidative stage). It participates in carbohydrate degradation; pentose phosphate pathway; D-ribulose 5-phosphate from D-glucose 6-phosphate (oxidative stage): step 2/3. Its function is as follows. Bifunctional enzyme localized in the lumen of the endoplasmic reticulum that catalyzes the first two steps of the oxidative branch of the pentose phosphate pathway/shunt, an alternative to glycolysis and a major source of reducing power and metabolic intermediates for biosynthetic processes. Has a hexose-6-phosphate dehydrogenase activity, with broad substrate specificity compared to glucose-6-phosphate 1-dehydrogenase/G6PD, and catalyzes the first step of the pentose phosphate pathway. In addition, acts as a 6-phosphogluconolactonase and catalyzes the second step of the pentose phosphate pathway. May have a dehydrogenase activity for alternative substrates including glucosamine 6-phosphate and glucose 6-sulfate. The main function of this enzyme is to provide reducing equivalents such as NADPH to maintain the adequate levels of reductive cofactors in the oxidizing environment of the endoplasmic reticulum. By producing NADPH that is needed by reductases of the lumen of the endoplasmic reticulum like corticosteroid 11-beta-dehydrogenase isozyme 1/HSD11B1, indirectly regulates their activity. The protein is GDH/6PGL endoplasmic bifunctional protein of Oryctolagus cuniculus (Rabbit).